A 471-amino-acid chain; its full sequence is Putative pentatricopeptide repeat-containing protein At1g53330 (471 aa).

PPR repeat units lie at residues 46–81 (SLLC…RIVP), 82–116 (TEII…RCQR), 117–147 (TVKS…IDEF), 151–185 (DACT…KVKP), 186–221 (TGVT…GVRP), 222–256 (TVHI…KIKV), 257–291 (DAAI…GCKP), 292–326 (DTVT…GLKP), 327–361 (DVIS…GCSP), and 362–396 (DTLS…GYKP).

This sequence belongs to the PPR family. P subfamily.

Functionally, involved during embryo development. This chain is Putative pentatricopeptide repeat-containing protein At1g53330, found in Arabidopsis thaliana (Mouse-ear cress).